Consider the following 166-residue polypeptide: Interferon gamma (166 aa).

An N-terminal signal peptide occupies residues 1–23; sequence MKYTSSFLALLLSVLLGFSGSYG. The residue at position 24 (Q24) is a Pyrrolidone carboxylic acid. 2 N-linked (GlcNAc...) asparagine glycosylation sites follow: N39 and N106.

Belongs to the type II (or gamma) interferon family. Homodimer. Interacts with IFNGR1 (via extracellular domain); this interaction promotes IFNGR1 dimerization. In terms of tissue distribution, released primarily from activated T lymphocytes.

The protein resides in the secreted. In terms of biological role, type II interferon produced by immune cells such as T-cells and NK cells that plays crucial roles in antimicrobial, antiviral, and antitumor responses by activating effector immune cells and enhancing antigen presentation. Primarily signals through the JAK-STAT pathway after interaction with its receptor IFNGR1 to affect gene regulation. Upon IFNG binding, IFNGR1 intracellular domain opens out to allow association of downstream signaling components JAK2, JAK1 and STAT1, leading to STAT1 activation, nuclear translocation and transcription of IFNG-regulated genes. Many of the induced genes are transcription factors such as IRF1 that are able to further drive regulation of a next wave of transcription. Plays a role in class I antigen presentation pathway by inducing a replacement of catalytic proteasome subunits with immunoproteasome subunits. In turn, increases the quantity, quality, and repertoire of peptides for class I MHC loading. Increases the efficiency of peptide generation also by inducing the expression of activator PA28 that associates with the proteasome and alters its proteolytic cleavage preference. Up-regulates as well MHC II complexes on the cell surface by promoting expression of several key molecules such as cathepsins B/CTSB, H/CTSH, and L/CTSL. Participates in the regulation of hematopoietic stem cells during development and under homeostatic conditions by affecting their development, quiescence, and differentiation. The sequence is that of Interferon gamma (IFNG) from Capra hircus (Goat).